A 160-amino-acid chain; its full sequence is Nucleotide-binding protein VS_1405 (160 aa).

The protein belongs to the YajQ family.

Its function is as follows. Nucleotide-binding protein. The sequence is that of Nucleotide-binding protein VS_1405 from Vibrio atlanticus (strain LGP32) (Vibrio splendidus (strain Mel32)).